We begin with the raw amino-acid sequence, 375 residues long: tRNA-specific 2-thiouridylase MnmA (375 aa).

ATP contacts are provided by residues 9–16 (AMSGGVDS) and leucine 35. The active-site Nucleophile is cysteine 105. Cysteine 105 and cysteine 201 are joined by a disulfide. Glycine 129 contacts ATP. Residues 151–153 (KNQ) are interaction with tRNA. The Cysteine persulfide intermediate role is filled by cysteine 201. Positions 307–308 (RY) are interaction with tRNA.

Belongs to the MnmA/TRMU family.

Its subcellular location is the cytoplasm. It carries out the reaction S-sulfanyl-L-cysteinyl-[protein] + uridine(34) in tRNA + AH2 + ATP = 2-thiouridine(34) in tRNA + L-cysteinyl-[protein] + A + AMP + diphosphate + H(+). Catalyzes the 2-thiolation of uridine at the wobble position (U34) of tRNA, leading to the formation of s(2)U34. The chain is tRNA-specific 2-thiouridylase MnmA from Leptospira interrogans serogroup Icterohaemorrhagiae serovar Lai (strain 56601).